The chain runs to 507 residues: ATP synthase subunit alpha, chloroplastic (507 aa).

170-177 lines the ATP pocket; sequence GDRQTGKT. Phosphothreonine is present on Thr257.

This sequence belongs to the ATPase alpha/beta chains family. As to quaternary structure, F-type ATPases have 2 components, CF(1) - the catalytic core - and CF(0) - the membrane proton channel. CF(1) has five subunits: alpha(3), beta(3), gamma(1), delta(1), epsilon(1). CF(0) has four main subunits: a, b, b' and c.

It localises to the plastid. Its subcellular location is the chloroplast thylakoid membrane. It catalyses the reaction ATP + H2O + 4 H(+)(in) = ADP + phosphate + 5 H(+)(out). Its function is as follows. Produces ATP from ADP in the presence of a proton gradient across the membrane. The alpha chain is a regulatory subunit. This Barbarea verna (Land cress) protein is ATP synthase subunit alpha, chloroplastic.